The primary structure comprises 421 residues: MVADVLLTHFNQLFCLNDPGHPLTGQEMKKATIVEDGYIAIKDGLIVALGSGEPDAELVGPQTIMRSYKGKIATPGIIDCHTHLVYGGSREHEFAKKLAGVPYLDILAQGGGILSTVRATRSASFDNLYQKSKRLLDYMLLHGVTTVEAKSGYGLDWETEKRQLDVVAALEKDHPIDLVSTFMAAHAIPEEYKGNPKAYLDVIIKDMLPVVKEKNLAEFCDIFCEKNVFTADESRYLLSKAKEMGFKLRIHADEIASIGGVDVAAELSAVSAEHLMMITNDGIAKLIGAGVIGNLLPATTFSLMEDTYAPARKMIDAGMAITLSTDSNPGSCPTANMQFVMQLGCFMLRLTPIEVLNAVTINAAYSVNRQERVGSLTVGKEADIAIFDAPNIDYLFYFFATNLIHQVYKKGQLTVDRGRIL.

Positions 81 and 83 each coordinate Fe(3+). Residues histidine 81 and histidine 83 each coordinate Zn(2+). 4-imidazolone-5-propanoate is bound by residues arginine 90, tyrosine 153, and histidine 186. Position 153 (tyrosine 153) interacts with N-formimidoyl-L-glutamate. Histidine 251 provides a ligand contact to Fe(3+). A Zn(2+)-binding site is contributed by histidine 251. A 4-imidazolone-5-propanoate-binding site is contributed by glutamate 254. Aspartate 326 contributes to the Fe(3+) binding site. Residue aspartate 326 coordinates Zn(2+). Residues asparagine 328 and glycine 330 each coordinate N-formimidoyl-L-glutamate. Serine 331 serves as a coordination point for 4-imidazolone-5-propanoate.

Belongs to the metallo-dependent hydrolases superfamily. HutI family. The cofactor is Zn(2+). Fe(3+) is required as a cofactor.

It localises to the cytoplasm. It catalyses the reaction 4-imidazolone-5-propanoate + H2O = N-formimidoyl-L-glutamate. The protein operates within amino-acid degradation; L-histidine degradation into L-glutamate; N-formimidoyl-L-glutamate from L-histidine: step 3/3. Its function is as follows. Catalyzes the hydrolytic cleavage of the carbon-nitrogen bond in imidazolone-5-propanoate to yield N-formimidoyl-L-glutamate. It is the third step in the universal histidine degradation pathway. The protein is Imidazolonepropionase of Streptococcus pyogenes serotype M6 (strain ATCC BAA-946 / MGAS10394).